Consider the following 308-residue polypeptide: Probable peptidyl-prolyl cis-trans isomerase B (308 aa).

Residues 74-123 are disordered; it reads DHQSTTSATPTDSASTSPPQAATAPPLPPFKPSANLGANCQYPPSPDKAV. Positions 77-97 are enriched in low complexity; the sequence is STTSATPTDSASTSPPQAATA. A PPIase cyclophilin-type domain is found at 139–307; the sequence is AQVSVSMVTN…TEVTITSVLL (169 aa).

The protein belongs to the cyclophilin-type PPIase family.

The enzyme catalyses [protein]-peptidylproline (omega=180) = [protein]-peptidylproline (omega=0). Functionally, PPIases accelerate the folding of proteins. It catalyzes the cis-trans isomerization of proline imidic peptide bonds in oligopeptides. The polypeptide is Probable peptidyl-prolyl cis-trans isomerase B (ppiB) (Mycobacterium tuberculosis (strain CDC 1551 / Oshkosh)).